Here is a 294-residue protein sequence, read N- to C-terminus: Cell division control protein 2 homolog 2 (294 aa).

Residues 4–287 (YEKVEKIGEG…ARGALEHEYF (284 aa)) form the Protein kinase domain. Residues 10 to 18 (IGEGTYGVV) and K33 each bind ATP. At T14 the chain carries Phosphothreonine. Y15 is subject to Phosphotyrosine. Residue D127 is the Proton acceptor of the active site. A Phosphothreonine; by CAK modification is found at T161.

Belongs to the protein kinase superfamily. CMGC Ser/Thr protein kinase family. CDC2/CDKX subfamily. As to expression, found in most organs including root, young leaf, stem, vegetative meristem and flower bud.

The enzyme catalyses L-seryl-[protein] + ATP = O-phospho-L-seryl-[protein] + ADP + H(+). It carries out the reaction L-threonyl-[protein] + ATP = O-phospho-L-threonyl-[protein] + ADP + H(+). Its activity is regulated as follows. Phosphorylation at Thr-14 or Tyr-15 inactivates the enzyme, while phosphorylation at Thr-161 activates it. Functionally, plays a key role in the control of the eukaryotic cell cycle. Component of the kinase complex that phosphorylates the repetitive C-terminus of RNA polymerase II. The protein is Cell division control protein 2 homolog 2 (CDC2B) of Medicago sativa (Alfalfa).